Here is a 53-residue protein sequence, read N- to C-terminus: UPF0391 membrane protein TM1040_2720 (53 aa).

2 helical membrane-spanning segments follow: residues 4–24 and 29–48; these read WALAFLVIALIAAVFGFGGIA and GIAQILFFIFLVMFVVALIL.

The protein belongs to the UPF0391 family.

The protein localises to the cell membrane. This chain is UPF0391 membrane protein TM1040_2720, found in Ruegeria sp. (strain TM1040) (Silicibacter sp.).